The chain runs to 446 residues: NADH oxidase (446 aa).

FAD is bound by residues Gly7 to Ala11, Asp32, Cys42, Val79, Ala109 to Ser112, Lys131, and Tyr158. His10 serves as the catalytic Proton acceptor. The active-site Redox-active is Cys42. At Cys42 the chain carries Cysteine sulfinic acid (-SO2H). Ile159, Asp178, Tyr187, and Gly244 together coordinate NAD(+). Residue Asp282 coordinates FAD. Ala298 is an NAD(+) binding site. Leu299, Ala300, and Ser301 together coordinate FAD. Residue Gly329 participates in NAD(+) binding. Residue Phe427 participates in FAD binding.

The protein belongs to the class-III pyridine nucleotide-disulfide oxidoreductase family. As to quaternary structure, homodimer. Requires FAD as cofactor.

It carries out the reaction 2 NADH + O2 + 2 H(+) = 2 NAD(+) + 2 H2O. Inhibited by hydrogen peroxide, sulfhydryl reagents and quinine, but not by EDTA. Catalyzes the four-electron reduction of molecular oxygen to water. Active on beta-NADH, but not on alpha-NADH, beta-NADPH or alpha-NADPH. Under aerobic conditions, oxygen acts as the electron acceptor. Under anaerobic conditions, DCIP and MB can replace oxygen as the electron acceptor. The chain is NADH oxidase from Lactococcus lactis subsp. cremoris (strain MG1363).